The primary structure comprises 490 residues: GTPase Der (490 aa).

EngA-type G domains are found at residues 3–166 (PVVA…MDDV) and 203–376 (IKLA…DSST). GTP-binding positions include 9 to 16 (GRPNVGKS), 56 to 60 (DTGGI), 118 to 121 (NKTD), 209 to 216 (GRPNVGKS), 256 to 260 (DTAGV), and 321 to 324 (NKWD). The region spanning 377-461 (RRVSTAMLTR…PIRIQFKEGE (85 aa)) is the KH-like domain.

The protein belongs to the TRAFAC class TrmE-Era-EngA-EngB-Septin-like GTPase superfamily. EngA (Der) GTPase family. As to quaternary structure, associates with the 50S ribosomal subunit.

Its function is as follows. GTPase that plays an essential role in the late steps of ribosome biogenesis. The protein is GTPase Der of Salmonella choleraesuis (strain SC-B67).